A 248-amino-acid polypeptide reads, in one-letter code: MERASLIQKAKLAEQAERYEDMAAFMKSAVEKGEELSCEERNLLSVAYKNVVGGQRAAWRVLSSIEQKSNEESSEEKGPEVQEYREKVETELRGVCDTVLGLLDTHLIKEAGDAESRVFYLKMKGDYYRYLAEVATGDDKKRIIDSARSAYQEAMDISKKEMPPTNPIRLGLALNFSVFHYEIANSPEEAISLAKTTFDEAMADLHTLSEDSYKDSTLIMQLLRDNLTLWTADNAGEEGGEAPEEPQS.

Residues S5, S74, and S248 each carry the phosphoserine modification.

This sequence belongs to the 14-3-3 family. In terms of assembly, homodimer. Interacts with KRT17 and SAMSN1. Found in a complex with XPO7, EIF4A1, ARHGAP1, VPS26A, VPS29 and VPS35. Interacts with GAB2. Interacts with SRPK2. Interacts with COPS6. Interacts with COP1; this interaction leads to proteasomal degradation. Interacts with the 'Thr-369' phosphorylated form of DAPK2. Interacts with PI4KB. Interacts with SLITRK1. Interacts with LRRK2; this interaction is dependent on LRRK2 phosphorylation. Interacts with PKP3 (via N-terminus); the interaction maintains the cytoplasmic pool of PKP3, facilitates PKP3 exchange at desmosomes and restricts PKP3 localization to existing desmosome cell junctions. Interacts with LCP2. Ubiquitinated. Ubiquitination by RFFL induces proteasomal degradation and indirectly regulates p53/TP53 activation.

It is found in the cytoplasm. It localises to the nucleus. Its subcellular location is the secreted. Its function is as follows. Adapter protein implicated in the regulation of a large spectrum of both general and specialized signaling pathways. Binds to a large number of partners, usually by recognition of a phosphoserine or phosphothreonine motif. Binding generally results in the modulation of the activity of the binding partner. Promotes cytosolic retention of GBP1 GTPase by binding to phosphorylated GBP1, thereby inhibiting the innate immune response. Also acts as a TP53/p53-regulated inhibitor of G2/M progression. When bound to KRT17, regulates protein synthesis and epithelial cell growth by stimulating Akt/mTOR pathway. Acts to maintain desmosome cell junction adhesion in epithelial cells via interacting with and sequestering PKP3 to the cytoplasm, thereby restricting its translocation to existing desmosome structures and therefore maintaining desmosome protein homeostasis. Also acts to facilitate PKP3 exchange at desmosome plaques, thereby maintaining keratinocyte intercellular adhesion. May also regulate MDM2 autoubiquitination and degradation and thereby activate p53/TP53. The sequence is that of 14-3-3 protein sigma (SFN) from Bos taurus (Bovine).